Reading from the N-terminus, the 368-residue chain is Interferon-stimulated 20 kDa exonuclease-like 2 (368 aa).

Disordered regions lie at residues 33 to 107 (FLEQ…APSK) and 127 to 187 (PKTK…PTVP). The span at 42-54 (KKNQPPNKVSKLN) shows a compositional bias: polar residues. The segment covering 77-96 (KKKEAAASKRDSERSKDKKA) has biased composition (basic and acidic residues). Basic residues predominate over residues 131–145 (STQKKGSKKKSLKKK). One can recognise an Exonuclease domain in the interval 194 to 368 (MVAIDCEMVG…QHLAQNPPEN (175 aa)).

The protein localises to the nucleus. It localises to the nucleolus. 3'-&gt; 5'-exoribonuclease involved in ribosome biogenesis in the processing of the 12S pre-rRNA. Displays a strong specificity for a 3'-end containing a free hydroxyl group. The polypeptide is Interferon-stimulated 20 kDa exonuclease-like 2 (Isg20l2) (Mus musculus (Mouse)).